Consider the following 55-residue polypeptide: Neurotoxin BmP08 (55 aa).

The signal sequence occupies residues 1–23; the sequence is MKIFFAVLVILVLFSMLIWTAYG. 3 disulfides stabilise this stretch: Cys-30–Cys-45, Cys-36–Cys-50, and Cys-39–Cys-53.

Expressed by the venom gland.

The protein resides in the secreted. The protein is Neurotoxin BmP08 of Olivierus martensii (Manchurian scorpion).